The chain runs to 553 residues: RNA N(6)-adenosine-methyltransferase METTL16 (553 aa).

The segment at 17 to 20 is RNA-binding; that stretch reads PPDF. The S-adenosyl-L-methionine site is built by R82, G110, S114, E133, T164, and N184. The segment at 163–167 is K-loop; the sequence is KTLLM. RNA-binding regions lie at residues 199–211, 250–254, and 277–283; these read SRNS…SSVN, GKKCS, and QGRTMRW. The interval 289–400 is VCR 1; that stretch reads FYDDVTVPSP…QLREVPRAPE (112 aa). 3 positions are modified to phosphoserine: S329, S425, and S429. The tract at residues 457–496 is disordered; sequence EETPEATEDERDEERGGMEAMESCKGSSNGAQDGEASEKG. The span at 458–468 shows a compositional bias: acidic residues; that stretch reads ETPEATEDERD. T463 is subject to Phosphothreonine. A VCR 2 region spans residues 506–553; that stretch reads YLFKCLVNIKKEAGDAVVEMHWVEGQNRDLMNQLCTYVRNQILRLVAS.

It belongs to the methyltransferase superfamily. METTL16/RlmF family. Interacts with MEPCE. Interacts with LARP7.

It localises to the nucleus. The protein localises to the cytoplasm. It carries out the reaction adenosine in U6 snRNA + S-adenosyl-L-methionine = N(6)-methyladenosine in U6 snRNA + S-adenosyl-L-homocysteine + H(+). It catalyses the reaction an adenosine in mRNA + S-adenosyl-L-methionine = an N(6)-methyladenosine in mRNA + S-adenosyl-L-homocysteine + H(+). Its activity is regulated as follows. Methyltransferase activity is autoinhibited by the K-loop region that blocks S-adenosyl-L-methionine-binding. Upon activation, K-loop changes conformation, allowing S-adenosyl-L-methionine-binding and subsequent methyltransferase activity. mRNA N6-adenosine-methyltransferase activity is inhibited by zinc. RNA N6-methyltransferase that methylates adenosine residues at the N(6) position of a subset of RNAs and is involved in S-adenosyl-L-methionine homeostasis by regulating expression of MAT2A transcripts. Able to N6-methylate a subset of mRNAs and U6 small nuclear RNAs (U6 snRNAs). In contrast to the METTL3-METTL14 heterodimer, only able to methylate a limited number of RNAs: requires both a 5'UACAGAGAA-3' nonamer sequence and a specific RNA structure. Plays a key role in S-adenosyl-L-methionine homeostasis by mediating N6-methylation of MAT2A mRNAs, altering splicing of MAT2A transcripts: in presence of S-adenosyl-L-methionine, binds the 3'-UTR region of MAT2A mRNA and specifically N6-methylates the first hairpin of MAT2A mRNA, preventing recognition of their 3'-splice site by U2AF1/U2AF35, thereby inhibiting splicing and protein production of S-adenosylmethionine synthase. In S-adenosyl-L-methionine-limiting conditions, binds the 3'-UTR region of MAT2A mRNA but stalls due to the lack of a methyl donor, preventing N6-methylation and promoting expression of MAT2A. In addition to mRNAs, also able to mediate N6-methylation of U6 small nuclear RNA (U6 snRNA): specifically N6-methylates adenine in position 43 of U6 snRNAs. Also able to bind various lncRNAs, such as 7SK snRNA (7SK RNA) or 7SL RNA. Specifically binds the 3'-end of the MALAT1 long non-coding RNA. The chain is RNA N(6)-adenosine-methyltransferase METTL16 from Mus musculus (Mouse).